The sequence spans 107 residues: Probable 4-amino-4-deoxy-L-arabinose-phosphoundecaprenol flippase subunit ArnE (107 aa).

Residues 31-105 enclose the EamA domain; it reads RVWGWLALSL…IIVGIILLGG (75 aa). Helical transmembrane passes span 34–54, 57–77, and 85–105; these read GWLA…LFVL, VPVS…TLAA, and IALR…LLGG.

It belongs to the ArnE family. As to quaternary structure, heterodimer of ArnE and ArnF.

It localises to the cell inner membrane. Its pathway is bacterial outer membrane biogenesis; lipopolysaccharide biosynthesis. Functionally, translocates 4-amino-4-deoxy-L-arabinose-phosphoundecaprenol (alpha-L-Ara4N-phosphoundecaprenol) from the cytoplasmic to the periplasmic side of the inner membrane. This chain is Probable 4-amino-4-deoxy-L-arabinose-phosphoundecaprenol flippase subunit ArnE, found in Enterobacter sp. (strain 638).